The following is a 126-amino-acid chain: Large ribosomal subunit protein eL8 (126 aa).

The protein belongs to the eukaryotic ribosomal protein eL8 family. Part of the 50S ribosomal subunit. Probably part of the RNase P complex.

The protein localises to the cytoplasm. Its function is as follows. Multifunctional RNA-binding protein that recognizes the K-turn motif in ribosomal RNA, the RNA component of RNase P, box H/ACA, box C/D and box C'/D' sRNAs. This Sulfolobus acidocaldarius (strain ATCC 33909 / DSM 639 / JCM 8929 / NBRC 15157 / NCIMB 11770) protein is Large ribosomal subunit protein eL8.